The primary structure comprises 262 residues: Hydroxyethylthiazole kinase (262 aa).

Met-41 is a substrate binding site. Arg-117 and Ser-163 together coordinate ATP. A substrate-binding site is contributed by Gly-190.

Belongs to the Thz kinase family. Mg(2+) is required as a cofactor.

It catalyses the reaction 5-(2-hydroxyethyl)-4-methylthiazole + ATP = 4-methyl-5-(2-phosphooxyethyl)-thiazole + ADP + H(+). Its pathway is cofactor biosynthesis; thiamine diphosphate biosynthesis; 4-methyl-5-(2-phosphoethyl)-thiazole from 5-(2-hydroxyethyl)-4-methylthiazole: step 1/1. In terms of biological role, catalyzes the phosphorylation of the hydroxyl group of 4-methyl-5-beta-hydroxyethylthiazole (THZ). The chain is Hydroxyethylthiazole kinase from Levilactobacillus brevis (strain ATCC 367 / BCRC 12310 / CIP 105137 / JCM 1170 / LMG 11437 / NCIMB 947 / NCTC 947) (Lactobacillus brevis).